Here is a 251-residue protein sequence, read N- to C-terminus: Hydroxyacylglutathione hydrolase (251 aa).

Residues histidine 59, histidine 61, aspartate 63, histidine 64, histidine 118, aspartate 141, and histidine 179 each coordinate Zn(2+).

It belongs to the metallo-beta-lactamase superfamily. Glyoxalase II family. In terms of assembly, monomer. The cofactor is Zn(2+).

It carries out the reaction an S-(2-hydroxyacyl)glutathione + H2O = a 2-hydroxy carboxylate + glutathione + H(+). It participates in secondary metabolite metabolism; methylglyoxal degradation; (R)-lactate from methylglyoxal: step 2/2. In terms of biological role, thiolesterase that catalyzes the hydrolysis of S-D-lactoyl-glutathione to form glutathione and D-lactic acid. This chain is Hydroxyacylglutathione hydrolase, found in Prochlorococcus marinus (strain NATL1A).